Reading from the N-terminus, the 121-residue chain is uncharacterized protein (121 aa).

Residues 65 to 84 (TILFYTPTLICFLFLQNFLY) traverse the membrane as a helical segment.

It localises to the membrane. This is an uncharacterized protein from Saccharomyces cerevisiae (strain ATCC 204508 / S288c) (Baker's yeast).